Consider the following 270-residue polypeptide: Large ribosomal subunit protein uL30 (270 aa).

Met1 carries the N-acetylmethionine modification. Tandem repeats lie at residues 7 to 18, 19 to 29, 30 to 40, 41 to 52, 53 to 64, and 65 to 76. The tract at residues 7 to 76 is 6 X 12 AA tandem repeats; the sequence is KKKKVATVPG…ARRKLIYEKA (70 aa). Thr39 is modified (phosphothreonine). Lys146 bears the N6-acetyllysine mark. Position 149 is an N6-succinyllysine (Lys149). Tyr161 is subject to Phosphotyrosine.

This sequence belongs to the universal ribosomal protein uL30 family. As to quaternary structure, component of the large ribosomal subunit. Homodimer. Interacts with DHX33.

It is found in the cytoplasm. Component of the large ribosomal subunit. The ribosome is a large ribonucleoprotein complex responsible for the synthesis of proteins in the cell. Binds to G-rich structures in 28S rRNA and in mRNAs. Plays a regulatory role in the translation apparatus; inhibits cell-free translation of mRNAs. The sequence is that of Large ribosomal subunit protein uL30 (Rpl7) from Mus musculus (Mouse).